A 557-amino-acid polypeptide reads, in one-letter code: Urocanate hydratase (557 aa).

Residues 53 to 54, glutamine 131, 177 to 179, glutamate 197, 243 to 244, 264 to 268, 274 to 275, and tyrosine 323 each bind NAD(+); these read GG, GMG, NA, QTSAH, and YL. Cysteine 411 is a catalytic residue. Glycine 493 provides a ligand contact to NAD(+).

This sequence belongs to the urocanase family. It depends on NAD(+) as a cofactor.

It localises to the cytoplasm. It carries out the reaction 4-imidazolone-5-propanoate = trans-urocanate + H2O. It participates in amino-acid degradation; L-histidine degradation into L-glutamate; N-formimidoyl-L-glutamate from L-histidine: step 2/3. Its function is as follows. Catalyzes the conversion of urocanate to 4-imidazolone-5-propionate. This Mesorhizobium japonicum (strain LMG 29417 / CECT 9101 / MAFF 303099) (Mesorhizobium loti (strain MAFF 303099)) protein is Urocanate hydratase.